The following is a 1088-amino-acid chain: Exportin-T (1088 aa).

A compositionally biased stretch (low complexity) spans 435–503 (KNNNNKNKNT…VKNANNIKNN (69 aa)). Disordered regions lie at residues 435–513 (KNNN…DDDD) and 1059–1088 (LNNN…KNGH).

It belongs to the exportin family.

It is found in the nucleus. It localises to the cytoplasm. Mediates the nuclear export of aminoacylated tRNAs. The polypeptide is Exportin-T (xpot) (Dictyostelium discoideum (Social amoeba)).